A 506-amino-acid polypeptide reads, in one-letter code: Spindle pole body protein CSA6 (506 aa).

Disordered stretches follow at residues 18–121 (SPIK…PNEN), 252–276 (EKHNNPQDSPPKVKIATPDPEVETQ), 329–429 (PSSP…YSIR), and 447–470 (KNDQKDTNSPEESNTDGKEEEEKV). The span at 38-48 (IDLRDYMDRQK) shows a compositional bias: basic and acidic residues. The span at 50–59 (SRNYSDSEYT) shows a compositional bias: polar residues. Residues 63–72 (IKREKPETKQ) show a composition bias toward basic and acidic residues. Positions 94 to 119 (PTKNYSQHVMQERSAPNSPQKKSLPN) are enriched in polar residues. Polar residues-rich tracts occupy residues 330–353 (SSPNHQTQPVFQSTPQSKVESVNL) and 361–389 (QPSHVSSNSQQNLSDKSRTSIPSRDNPSP). 2 stretches are compositionally biased toward basic and acidic residues: residues 412-422 (EWTREREERDG) and 461-470 (TDGKEEEEKV).

It is found in the cytoplasm. The protein resides in the cytoskeleton. It localises to the microtubule organizing center. The protein localises to the spindle pole body. Its function is as follows. Plays a role in mitotic spindle pole body organization, possibly at the point of spindle pole body separation. Required for mitotic exit. This is Spindle pole body protein CSA6 from Candida tropicalis (strain ATCC MYA-3404 / T1) (Yeast).